The chain runs to 149 residues: Flagellar assembly factor FliW (149 aa).

Belongs to the FliW family. Interacts with translational regulator CsrA and flagellin(s).

It localises to the cytoplasm. In terms of biological role, acts as an anti-CsrA protein, binds CsrA and prevents it from repressing translation of its target genes, one of which is flagellin. Binds to flagellin and participates in the assembly of the flagellum. This Thermotoga sp. (strain RQ2) protein is Flagellar assembly factor FliW.